Reading from the N-terminus, the 78-residue chain is RNA-binding protein KhpA (78 aa).

Residues 29 to 78 (TIIYELTVAKGDIGKIIGKEGRTIKAIRTLLVSVASRDNVKVSLEIMEER) enclose the KH domain.

It belongs to the KhpA RNA-binding protein family.

It is found in the cytoplasm. Functionally, a probable RNA-binding protein. This Chlamydia muridarum (strain MoPn / Nigg) protein is RNA-binding protein KhpA.